Consider the following 228-residue polypeptide: Cytidylate kinase (228 aa).

Residue 17 to 25 (GPTASGKGT) participates in ATP binding.

Belongs to the cytidylate kinase family. Type 1 subfamily.

It is found in the cytoplasm. The enzyme catalyses CMP + ATP = CDP + ADP. It carries out the reaction dCMP + ATP = dCDP + ADP. The protein is Cytidylate kinase of Burkholderia thailandensis (strain ATCC 700388 / DSM 13276 / CCUG 48851 / CIP 106301 / E264).